The chain runs to 276 residues: Large ribosomal subunit protein uL2c (276 aa).

The disordered stretch occupies residues 223–254 (VVKNPIDHPHGGGEGRSPIGRAKPVTPWGQPA).

It belongs to the universal ribosomal protein uL2 family. In terms of assembly, part of the 50S ribosomal subunit.

The protein resides in the plastid. It localises to the chloroplast. This chain is Large ribosomal subunit protein uL2c (rpl2), found in Emiliania huxleyi (Coccolithophore).